A 754-amino-acid chain; its full sequence is Pentatricopeptide repeat-containing protein At3g53700, chloroplastic (754 aa).

The transit peptide at 1–72 (MAFSSCLKFY…DSAALRLFNL (72 aa)) directs the protein to the chloroplast. 17 PPR repeats span residues 82-116 (EPAL…RCEM), 117-152 (GTST…GLKP), 153-187 (DTHF…GIKP), 188-222 (DVST…GLVP), 223-257 (DEKT…GCSW), 258-288 (SNVS…MSNQ), 294-328 (DQYT…GYDP), 329-363 (DVYT…DCSP), 364-398 (NTVT…GILP), 399-433 (DVCT…GCEP), 434-468 (DEFT…GCAR), 469-503 (SVIT…GVSR), 504-538 (NSVT…GQKP), 539-573 (DKYT…GCEP), 574-608 (DIVT…GINL), 609-643 (TPHA…NEAP), and 645-680 (DAVS…GFVP).

The protein belongs to the PPR family. P subfamily.

The protein resides in the plastid. It localises to the chloroplast. In terms of biological role, may be involved in female gametophyte development. The chain is Pentatricopeptide repeat-containing protein At3g53700, chloroplastic (MEE40) from Arabidopsis thaliana (Mouse-ear cress).